The following is a 433-amino-acid chain: Protein translocase subunit SecD (433 aa).

6 helical membrane-spanning segments follow: residues leucine 7–isoleucine 27, leucine 257–methionine 277, alanine 278–alanine 298, leucine 300–valine 320, threonine 354–glycine 374, and glycine 380–alanine 400.

This sequence belongs to the SecD/SecF family. SecD subfamily. In terms of assembly, forms a complex with SecF. Part of the essential Sec protein translocation apparatus which comprises SecA, SecYEG and auxiliary proteins SecDF. Other proteins may also be involved.

The protein resides in the cell membrane. Part of the Sec protein translocase complex. Interacts with the SecYEG preprotein conducting channel. SecDF uses the proton motive force (PMF) to complete protein translocation after the ATP-dependent function of SecA. This is Protein translocase subunit SecD from Alicyclobacillus acidocaldarius subsp. acidocaldarius (strain ATCC 27009 / DSM 446 / BCRC 14685 / JCM 5260 / KCTC 1825 / NBRC 15652 / NCIMB 11725 / NRRL B-14509 / 104-IA) (Bacillus acidocaldarius).